Reading from the N-terminus, the 347-residue chain is High mobility group protein 20A (347 aa).

Composition is skewed to polar residues over residues Met1–Leu10 and Ser40–Pro49. Disordered stretches follow at residues Met1 to Phe113 and Phe179 to Lys211. The span at Leu55 to Ser66 shows a compositional bias: low complexity. Basic and acidic residues predominate over residues Asn72 to Ser82. Residues Lys83–Pro96 show a composition bias toward basic residues. Residues Pro103–Gln171 constitute a DNA-binding region (HMG box). Ser105 carries the phosphoserine modification. Over residues Lys182 to Lys211 the composition is skewed to basic and acidic residues. The stretch at Ser229 to Gln273 forms a coiled coil.

Interacts with DTNB. As to expression, ubiquitous.

The protein localises to the nucleus. Plays a role in neuronal differentiation as chromatin-associated protein. Acts as inhibitor of HMG20B. Overcomes the repressive effects of the neuronal silencer REST and induces the activation of neuronal-specific genes. Involved in the recruitment of the histone methyltransferase KMT2A/MLL1 and consequent increased methylation of histone H3 lysine 4. The chain is High mobility group protein 20A (HMG20A) from Homo sapiens (Human).